A 138-amino-acid polypeptide reads, in one-letter code: ATP synthase epsilon chain (138 aa).

It belongs to the ATPase epsilon chain family. In terms of assembly, F-type ATPases have 2 components, CF(1) - the catalytic core - and CF(0) - the membrane proton channel. CF(1) has five subunits: alpha(3), beta(3), gamma(1), delta(1), epsilon(1). CF(0) has three main subunits: a, b and c.

The protein localises to the cell inner membrane. In terms of biological role, produces ATP from ADP in the presence of a proton gradient across the membrane. The sequence is that of ATP synthase epsilon chain from Geotalea uraniireducens (strain Rf4) (Geobacter uraniireducens).